Here is a 309-residue protein sequence, read N- to C-terminus: Foldase protein PrsA (309 aa).

Positions 1–22 are cleaved as a signal peptide; the sequence is MKTRSKLAAGFLTLMSVATLAA. Cys-23 is lipidated: N-palmitoyl cysteine. Cys-23 carries S-diacylglycerol cysteine lipidation. The region spanning 146 to 241 is the PpiC domain; that stretch reads TPETSVQVIK…TSYYIIKVTD (96 aa).

It belongs to the PrsA family.

It localises to the cell membrane. It carries out the reaction [protein]-peptidylproline (omega=180) = [protein]-peptidylproline (omega=0). Plays a major role in protein secretion by helping the post-translocational extracellular folding of several secreted proteins. The protein is Foldase protein PrsA of Streptococcus agalactiae serotype Ia (strain ATCC 27591 / A909 / CDC SS700).